The following is a 405-amino-acid chain: Angiopoietin-related protein 4 (405 aa).

The first 23 residues, 1–23, serve as a signal peptide directing secretion; that stretch reads MRCAPTAGAALVLCAATAGLLSA. Residues 54-146 adopt a coiled-coil conformation; the sequence is GLREHVERTR…QNLQSQIDLL (93 aa). Asn-176 carries N-linked (GlcNAc...) asparagine glycosylation. In terms of domain architecture, Fibrinogen C-terminal spans 178–400; that stretch reads TRLHRPPRDC…ATTLLIQPME (223 aa). Cys-187 and Cys-215 are disulfide-bonded. 2 N-linked (GlcNAc...) asparagine glycosylation sites follow: Asn-231 and Asn-237. Cysteines 340 and 353 form a disulfide.

In terms of assembly, homooligomer; disulfide-linked via Cys residues in the N-terminal part of the protein. The homooligomer undergoes proteolytic processing to release its carboxyl fibrinogen-like domain, which circulates as a monomer. The homooligomer unprocessed form is able to interact with the extracellular matrix. In terms of processing, N-glycosylated. Post-translationally, forms disulfide-linked dimers and tetramers. Cleaved into a smaller N-terminal chain and a larger chain that contains the fibrinogen C-terminal domain; both cleaved and uncleaved forms are detected in the extracellular space. The cleaved form is not present within the cell.

The protein localises to the secreted. It localises to the extracellular space. It is found in the extracellular matrix. Functionally, mediates inactivation of the lipoprotein lipase LPL, and thereby plays a role in the regulation of triglyceride clearance from the blood serum and in lipid metabolism. May also play a role in regulating glucose homeostasis and insulin sensitivity. Inhibits proliferation, migration, and tubule formation of endothelial cells and reduces vascular leakage. Upon heterologous expression, inhibits the adhesion of endothelial cell to the extracellular matrix (ECM), and inhibits the reorganization of the actin cytoskeleton, formation of actin stress fibers and focal adhesions in endothelial cells that have adhered to ANGPTL4-containing ECM (in vitro). Depending on context, may modulate tumor-related angiogenesis. In terms of biological role, mediates inactivation of the lipoprotein lipase LPL, and thereby plays an important role in the regulation of triglyceride clearance from the blood serum and in lipid metabolism. Has higher activity in LPL inactivation than the uncleaved protein. The sequence is that of Angiopoietin-related protein 4 (Angptl4) from Rattus norvegicus (Rat).